Reading from the N-terminus, the 468-residue chain is Sulfate adenylyltransferase subunit 1 (468 aa).

Residues 22 to 239 (KELLRFLTCG…TVEIASDKNA (218 aa)) enclose the tr-type G domain. Residues 31-38 (GSVDDGKS) are G1. 31 to 38 (GSVDDGKS) lines the GTP pocket. Positions 89–93 (GITID) are G2. Residues 110 to 113 (DTPG) form a G3 region. GTP contacts are provided by residues 110–114 (DTPGH) and 165–168 (NKMD). The interval 165 to 168 (NKMD) is G4. A G5 region spans residues 202–204 (SAL).

This sequence belongs to the TRAFAC class translation factor GTPase superfamily. Classic translation factor GTPase family. CysN/NodQ subfamily. In terms of assembly, heterodimer composed of CysD, the smaller subunit, and CysN.

It carries out the reaction sulfate + ATP + H(+) = adenosine 5'-phosphosulfate + diphosphate. It functions in the pathway sulfur metabolism; hydrogen sulfide biosynthesis; sulfite from sulfate: step 1/3. Functionally, with CysD forms the ATP sulfurylase (ATPS) that catalyzes the adenylation of sulfate producing adenosine 5'-phosphosulfate (APS) and diphosphate, the first enzymatic step in sulfur assimilation pathway. APS synthesis involves the formation of a high-energy phosphoric-sulfuric acid anhydride bond driven by GTP hydrolysis by CysN coupled to ATP hydrolysis by CysD. In Teredinibacter turnerae (strain ATCC 39867 / T7901), this protein is Sulfate adenylyltransferase subunit 1.